Consider the following 220-residue polypeptide: Glutamine amidotransferase-like class 1 domain-containing protein 1 (220 aa).

Residues 1 to 35 form the signal peptide; sequence MASERLPSRPACLLVASGAAEGVSAQSFLHCFTLA. N-linked (GlcNAc...) asparagine glycosylation is found at N57 and N201.

This sequence belongs to the peptidase C56 family. As to quaternary structure, homotetramer. Component of the FERRY complex composed of five subunits, TBCK, PPP1R21, FERRY3, CRYZL1 and GATD1 with a ratio of 1:2:1:2:4, respectively.

It is found in the secreted. The protein localises to the early endosome. Its function is as follows. Component of the FERRY complex (Five-subunit Endosomal Rab5 and RNA/ribosome intermediary). The FERRY complex directly interacts with mRNAs and RAB5A, and functions as a RAB5A effector involved in the localization and the distribution of specific mRNAs most likely by mediating their endosomal transport. The complex recruits mRNAs and ribosomes to early endosomes through direct mRNA-interaction. This is Glutamine amidotransferase-like class 1 domain-containing protein 1 from Bos taurus (Bovine).